Consider the following 291-residue polypeptide: MSAEIINGKEIAAEIRREIKQETAQFIAATGVRPGLAVILVGNDPASEVYVRNKGIQAEEVGFLSQIYRLPAQTTQAELLAKIVALNNDPQICGILVQLPLPAHLNAEIVLNTIDPNKDVDGFHPLNIGRLWAGEPCSVPCTPLGCSLILKRYFGDSLAGKKALIIGRSNIVGKPMAALLLQQHATVTIAHSKTPDVPALCRQADIVIAAVGQPELVKGDWIKSGAVVLDVGINRIAVGDKTKLVGDVAFESAKEVAAAITPVPGGIGPMTIACLLKNTLTLAKAIQQSGK.

NADP(+) contacts are provided by residues 167 to 169 (GRS), S192, and I233.

The protein belongs to the tetrahydrofolate dehydrogenase/cyclohydrolase family. In terms of assembly, homodimer.

The catalysed reaction is (6R)-5,10-methylene-5,6,7,8-tetrahydrofolate + NADP(+) = (6R)-5,10-methenyltetrahydrofolate + NADPH. The enzyme catalyses (6R)-5,10-methenyltetrahydrofolate + H2O = (6R)-10-formyltetrahydrofolate + H(+). Its pathway is one-carbon metabolism; tetrahydrofolate interconversion. In terms of biological role, catalyzes the oxidation of 5,10-methylenetetrahydrofolate to 5,10-methenyltetrahydrofolate and then the hydrolysis of 5,10-methenyltetrahydrofolate to 10-formyltetrahydrofolate. The chain is Bifunctional protein FolD from Dichelobacter nodosus (strain VCS1703A).